A 163-amino-acid polypeptide reads, in one-letter code: MEQNDLGLIEKIVYLNRVAKVVKGGRRFSFSALVVVGDGKGQVGFGLGKANEVPEAIRKASEKARKEMISVPLLDGTLPYEVLGRYGAGRVMLKPASKGTGIIAGGPVRAVLEVVGVHDILTKAIGTNNPHNVLRATIAGLASLRSADEVGQLRGKKVVTPRK.

The region spanning 8–71 (LIEKIVYLNR…EKARKEMISV (64 aa)) is the S5 DRBM domain.

This sequence belongs to the universal ribosomal protein uS5 family. Part of the 30S ribosomal subunit. Contacts proteins S4 and S8.

Functionally, with S4 and S12 plays an important role in translational accuracy. Located at the back of the 30S subunit body where it stabilizes the conformation of the head with respect to the body. This is Small ribosomal subunit protein uS5 from Maridesulfovibrio salexigens (strain ATCC 14822 / DSM 2638 / NCIMB 8403 / VKM B-1763) (Desulfovibrio salexigens).